Here is a 533-residue protein sequence, read N- to C-terminus: Flavin-dependent halogenase gsfI (533 aa).

Residues G14, G17, and E47 each coordinate FAD. Residues S331 and G332 each contribute to the chloride site.

Belongs to the flavin-dependent halogenase family.

It catalyses the reaction griseophenone C + FADH2 + chloride + O2 = griseophenone B + FAD + 2 H2O + H(+). The protein operates within secondary metabolite biosynthesis; terpenoid biosynthesis. Flavin-dependent halogenase; part of the gene cluster that mediates the biosynthesis of griseofulvin, an important antifungal drug that has been in use for a long time for treating dermatophyte infections. The first step of the pathway is the formation of the heptaketide backbone by gsfA which is initiated by priming with acetyl-CoA, followed by sequential condensations of 6 malonyl-CoA units. The resulting benzophenone can undergo a spontaneous dehydration to form norlichexanthone. However, the true precursor for the griseofulvin biosynthesis is not norlichexanthone, but the heptaketide benzophenone that is O-methylated at 3-OH by gsfB to produce griseophenone D which is further methylated at 9-OH by gsfC to yield griseophenone C. Griseophenone C is then substrate of halogenase gsfI which is responsible for the regio-specific chlorination at the C13 position to form griseophenone B. The cytochrome P450 gsfF catalyzes the coupling of orcinol and phloroglucinol rings in griseophenone B to form desmethyl-dehydrogriseofulvin A which is further methylated at 5-OH by gsfD to yield dehydrogriseofulvin. Finally, gsfE performs stereospecific reduction of enone 18 of dehydrogriseofulvin to afford the final product griseofulvin. The protein is Flavin-dependent halogenase gsfI of Penicillium aethiopicum.